A 135-amino-acid polypeptide reads, in one-letter code: Interleukin-4 (135 aa).

The signal sequence occupies residues 1–24; the sequence is MGLTYQLIPVLVCLLVCTSHFAHG. Cystine bridges form between Cys-27/Cys-135, Cys-48/Cys-85, and Cys-70/Cys-105. Asn-62 is a glycosylation site (N-linked (GlcNAc...) asparagine).

This sequence belongs to the IL-4/IL-13 family.

It is found in the secreted. Its function is as follows. Participates in at least several B-cell activation processes as well as of other cell types. It is a costimulator of DNA-synthesis. It induces the expression of class II MHC molecules on resting B-cells. It enhances both secretion and cell surface expression of IgE and IgG1. It also regulates the expression of the low affinity Fc receptor for IgE (CD23) on both lymphocytes and monocytes. Positively regulates IL31RA expression in macrophages. Stimulates autophagy in dendritic cells by interfering with mTORC1 signaling and through the induction of RUFY4. The protein is Interleukin-4 (IL4) of Boselaphus tragocamelus (Nilgai).